Consider the following 204-residue polypeptide: 3-isopropylmalate dehydratase small subunit (204 aa).

This sequence belongs to the LeuD family. LeuD type 1 subfamily. As to quaternary structure, heterodimer of LeuC and LeuD.

The enzyme catalyses (2R,3S)-3-isopropylmalate = (2S)-2-isopropylmalate. It participates in amino-acid biosynthesis; L-leucine biosynthesis; L-leucine from 3-methyl-2-oxobutanoate: step 2/4. In terms of biological role, catalyzes the isomerization between 2-isopropylmalate and 3-isopropylmalate, via the formation of 2-isopropylmaleate. The polypeptide is 3-isopropylmalate dehydratase small subunit (Psychromonas ingrahamii (strain DSM 17664 / CCUG 51855 / 37)).